A 129-amino-acid chain; its full sequence is MAKPAARPRKKVKKTVVDGIAHIHASFNNTIVTITDRQGNALSWATSGGSGFRGSRKSTPFAAQIAAERAGQAALEYGLKNLDVNVKGPGPGRESAVRALNSCGYKIASITDVTPIPHNGCRPPKKRRV.

This sequence belongs to the universal ribosomal protein uS11 family. As to quaternary structure, part of the 30S ribosomal subunit. Interacts with proteins S7 and S18. Binds to IF-3.

Located on the platform of the 30S subunit, it bridges several disparate RNA helices of the 16S rRNA. Forms part of the Shine-Dalgarno cleft in the 70S ribosome. In Pseudomonas entomophila (strain L48), this protein is Small ribosomal subunit protein uS11.